The sequence spans 374 residues: Anhydro-N-acetylmuramic acid kinase (374 aa).

12-19 is a binding site for ATP; the sequence is GTSLDGVD.

This sequence belongs to the anhydro-N-acetylmuramic acid kinase family.

It carries out the reaction 1,6-anhydro-N-acetyl-beta-muramate + ATP + H2O = N-acetyl-D-muramate 6-phosphate + ADP + H(+). It participates in amino-sugar metabolism; 1,6-anhydro-N-acetylmuramate degradation. It functions in the pathway cell wall biogenesis; peptidoglycan recycling. In terms of biological role, catalyzes the specific phosphorylation of 1,6-anhydro-N-acetylmuramic acid (anhMurNAc) with the simultaneous cleavage of the 1,6-anhydro ring, generating MurNAc-6-P. Is required for the utilization of anhMurNAc either imported from the medium or derived from its own cell wall murein, and thus plays a role in cell wall recycling. This is Anhydro-N-acetylmuramic acid kinase from Salmonella arizonae (strain ATCC BAA-731 / CDC346-86 / RSK2980).